The chain runs to 258 residues: MMNPLIIKLGGVLLDSEEALERLFSTLVNYRESHQRPLVIVHGGGCVVDELMKGLNLPVKKKNGLRVTPADQIDIITGALAGTANKTLLAWAKKHQIAAVGLFLGDGDSVKVTQLDEELGHVGLAQPGSPKLINSLLENGYLPVVSSIGVTDEGQLMNVNADQAATALAATLGADLILLSDVSGILDGKGQRIAEMTAAKAEQLIEQGIITDGMIVKVNAALDAARTLGRPVDIASWRHAEQLPALFNGMPMGTRILA.

Substrate-binding positions include 44–45, R66, and N158; that span reads GG. Residues 181-186 and 209-211 contribute to the ATP site; these read DVSGIL and IIT.

This sequence belongs to the acetylglutamate kinase family. ArgB subfamily. As to quaternary structure, homodimer.

Its subcellular location is the cytoplasm. The catalysed reaction is N-acetyl-L-glutamate + ATP = N-acetyl-L-glutamyl 5-phosphate + ADP. The protein operates within amino-acid biosynthesis; L-arginine biosynthesis; N(2)-acetyl-L-ornithine from L-glutamate: step 2/4. Catalyzes the ATP-dependent phosphorylation of N-acetyl-L-glutamate. This Shigella sonnei (strain Ss046) protein is Acetylglutamate kinase.